The primary structure comprises 279 residues: uncharacterized protein (279 aa).

3 consecutive transmembrane segments (helical) span residues 31–51 (GYIA…FHAT), 67–87 (LLSI…AKII), and 115–135 (EITG…SLAL).

This sequence belongs to the transketolase family. Thiamine diphosphate serves as cofactor.

The protein localises to the cell membrane. This is an uncharacterized protein from Sinorhizobium fredii (strain NBRC 101917 / NGR234).